A 1199-amino-acid polypeptide reads, in one-letter code: DNA-directed RNA polymerase subunit beta' (1199 aa).

Residues C60, C62, C75, and C78 each coordinate Zn(2+). Positions 449, 451, and 453 each coordinate Mg(2+). Positions 818, 892, 899, and 902 each coordinate Zn(2+).

This sequence belongs to the RNA polymerase beta' chain family. RNAP is composed of a core of 2 alpha, a beta and a beta' subunit. The core is associated with a delta subunit, and at least one of epsilon or omega. When a sigma factor is associated with the core the holoenzyme is formed, which can initiate transcription. It depends on Mg(2+) as a cofactor. The cofactor is Zn(2+).

The enzyme catalyses RNA(n) + a ribonucleoside 5'-triphosphate = RNA(n+1) + diphosphate. In terms of biological role, DNA-dependent RNA polymerase catalyzes the transcription of DNA into RNA using the four ribonucleoside triphosphates as substrates. The polypeptide is DNA-directed RNA polymerase subunit beta' (Bacillus subtilis (strain 168)).